The primary structure comprises 252 residues: Imidazole glycerol phosphate synthase subunit HisF (252 aa).

Residues Asp-11 and Asp-130 contribute to the active site.

It belongs to the HisA/HisF family. Heterodimer of HisH and HisF.

Its subcellular location is the cytoplasm. The enzyme catalyses 5-[(5-phospho-1-deoxy-D-ribulos-1-ylimino)methylamino]-1-(5-phospho-beta-D-ribosyl)imidazole-4-carboxamide + L-glutamine = D-erythro-1-(imidazol-4-yl)glycerol 3-phosphate + 5-amino-1-(5-phospho-beta-D-ribosyl)imidazole-4-carboxamide + L-glutamate + H(+). The protein operates within amino-acid biosynthesis; L-histidine biosynthesis; L-histidine from 5-phospho-alpha-D-ribose 1-diphosphate: step 5/9. IGPS catalyzes the conversion of PRFAR and glutamine to IGP, AICAR and glutamate. The HisF subunit catalyzes the cyclization activity that produces IGP and AICAR from PRFAR using the ammonia provided by the HisH subunit. The protein is Imidazole glycerol phosphate synthase subunit HisF of Bacillus velezensis (strain DSM 23117 / BGSC 10A6 / LMG 26770 / FZB42) (Bacillus amyloliquefaciens subsp. plantarum).